The chain runs to 332 residues: Transcription initiation factor IIB 2 (332 aa).

Residues 1-10 (MSDTITTRTY) are compositionally biased toward polar residues. Positions 1–36 (MSDTITTRTYSADAKSRDVRPRESERDETQQDETQV) are disordered. Residues 14–29 (AKSRDVRPRESERDET) show a composition bias toward basic and acidic residues. A TFIIB-type zinc finger spans residues 33–63 (ETQVCPECSGHLVTDEEHGETICEDCGLVVE). Positions 37, 40, 55, and 58 each coordinate Zn(2+). Residues 77 to 106 (DSAERDSKSRVGAPTTKMMHDKGLSTNIGW) are disordered. Repeat copies occupy residues 149–232 (GEID…VREL) and 243–324 (QYVP…ELLE).

Belongs to the TFIIB family.

Functionally, stabilizes TBP binding to an archaeal box-A promoter. Also responsible for recruiting RNA polymerase II to the pre-initiation complex (DNA-TBP-TFIIB). In Haloferax volcanii (strain ATCC 29605 / DSM 3757 / JCM 8879 / NBRC 14742 / NCIMB 2012 / VKM B-1768 / DS2) (Halobacterium volcanii), this protein is Transcription initiation factor IIB 2.